The primary structure comprises 264 residues: Ribosome-recycling factor, mitochondrial (264 aa).

The protein belongs to the RRF family.

The protein resides in the mitochondrion. In terms of biological role, necessary for protein synthesis in mitochondria. Functions as a ribosome recycling factor in mitochondria. The protein is Ribosome-recycling factor, mitochondrial (RRF1) of Yarrowia lipolytica (strain CLIB 122 / E 150) (Yeast).